A 207-amino-acid polypeptide reads, in one-letter code: 2,3-bisphosphoglycerate-dependent phosphoglycerate mutase (207 aa).

Residues 10–17 (RHGQSEWN), 23–24 (TG), Arg-62, 89–92 (ERDY), Lys-100, 116–117 (RR), and 160–161 (GN) each bind substrate. Residue His-11 is the Tele-phosphohistidine intermediate of the active site. Catalysis depends on Glu-89, which acts as the Proton donor/acceptor.

The protein belongs to the phosphoglycerate mutase family. BPG-dependent PGAM subfamily. In terms of assembly, homodimer.

The enzyme catalyses (2R)-2-phosphoglycerate = (2R)-3-phosphoglycerate. It participates in carbohydrate degradation; glycolysis; pyruvate from D-glyceraldehyde 3-phosphate: step 3/5. Its function is as follows. Catalyzes the interconversion of 2-phosphoglycerate and 3-phosphoglycerate. This is 2,3-bisphosphoglycerate-dependent phosphoglycerate mutase from Bradyrhizobium diazoefficiens (strain JCM 10833 / BCRC 13528 / IAM 13628 / NBRC 14792 / USDA 110).